A 396-amino-acid polypeptide reads, in one-letter code: Tryptophan synthase beta chain (396 aa).

Lys-86 carries the N6-(pyridoxal phosphate)lysine modification.

This sequence belongs to the TrpB family. As to quaternary structure, tetramer of two alpha and two beta chains. Pyridoxal 5'-phosphate serves as cofactor.

It catalyses the reaction (1S,2R)-1-C-(indol-3-yl)glycerol 3-phosphate + L-serine = D-glyceraldehyde 3-phosphate + L-tryptophan + H2O. It functions in the pathway amino-acid biosynthesis; L-tryptophan biosynthesis; L-tryptophan from chorismate: step 5/5. In terms of biological role, the beta subunit is responsible for the synthesis of L-tryptophan from indole and L-serine. This is Tryptophan synthase beta chain from Proteus mirabilis (strain HI4320).